The primary structure comprises 200 residues: dTTP/UTP pyrophosphatase (200 aa).

Aspartate 72 serves as the catalytic Proton acceptor.

The protein belongs to the Maf family. YhdE subfamily. Requires a divalent metal cation as cofactor.

It localises to the cytoplasm. It catalyses the reaction dTTP + H2O = dTMP + diphosphate + H(+). It carries out the reaction UTP + H2O = UMP + diphosphate + H(+). Its function is as follows. Nucleoside triphosphate pyrophosphatase that hydrolyzes dTTP and UTP. May have a dual role in cell division arrest and in preventing the incorporation of modified nucleotides into cellular nucleic acids. This is dTTP/UTP pyrophosphatase from Pseudomonas syringae pv. syringae (strain B728a).